The chain runs to 333 residues: Tetraacyldisaccharide 4'-kinase (333 aa).

ATP is bound at residue 60-67; sequence TVGGTGKT.

It belongs to the LpxK family.

The catalysed reaction is a lipid A disaccharide + ATP = a lipid IVA + ADP + H(+). It participates in glycolipid biosynthesis; lipid IV(A) biosynthesis; lipid IV(A) from (3R)-3-hydroxytetradecanoyl-[acyl-carrier-protein] and UDP-N-acetyl-alpha-D-glucosamine: step 6/6. Functionally, transfers the gamma-phosphate of ATP to the 4'-position of a tetraacyldisaccharide 1-phosphate intermediate (termed DS-1-P) to form tetraacyldisaccharide 1,4'-bis-phosphate (lipid IVA). The chain is Tetraacyldisaccharide 4'-kinase from Ectopseudomonas mendocina (strain ymp) (Pseudomonas mendocina).